Consider the following 329-residue polypeptide: T-cell acute lymphocytic leukemia protein 1 homolog (329 aa).

Disordered regions lie at residues 1–28 (MTERPPSEAARSDPQLEGQDAAEARMAP), 40–78 (ETSRAAPAEPPVIELGARSGAGGGPASGGGAARDLKGRD), and 91–125 (TELCRPPGPAPAPAPASAPAELPGDGRMVQLSPPA). Ser-12 bears the Phosphoserine mark. Residues 58-70 (SGAGGGPASGGGA) are compositionally biased toward gly residues. Pro residues predominate over residues 96-106 (PPGPAPAPAPA). At Ser-122 the chain carries Phosphoserine; by MAPK. The residue at position 172 (Ser-172) is a Phosphoserine. A bHLH domain is found at 187–239 (VRRIFTNSRERWRQQNVNGAFAELRKLIPTHPPDKKLSKNEILRLAMKYINFL). The disordered stretch occupies residues 247–329 (EEEGTQRAKP…LPAADGAGPR (83 aa)). Gly residues predominate over residues 263-273 (GAGGGGAGGGI). The segment covering 317–329 (PALLPAADGAGPR) has biased composition (low complexity).

In terms of assembly, efficient DNA binding requires dimerization with another bHLH protein. Forms heterodimers with TCF3. Binds to the LIM domain containing protein LMO2 and to DRG1. Can assemble in a complex with LDB1 and LMO2. Component of a TAL-1 complex composed at least of CBFA2T3, LDB1, TAL1 and TCF3. Interacts with SBNO2; this interaction inhibits TAL1 occupancy of the DCSTAMP promoter, leading to the activation of the DCSTAMP promoter by the transcription factor MITF. Post-translationally, phosphorylated on serine residues. Phosphorylation of Ser-122 by MAPK is strongly stimulated by hypoxia. In terms of processing, ubiquitinated; subsequent to hypoxia-dependent phosphorylation of Ser-122, ubiquitination targets the protein for rapid degradation via the ubiquitin system. This process may be characteristic for microvascular endothelial cells, since it could not be observed in large vessel endothelial cells. In terms of tissue distribution, erythroid and myeloid cells.

The protein resides in the nucleus. Functionally, implicated in the genesis of hemopoietic malignancies. It may play an important role in hemopoietic differentiation. Serves as a positive regulator of erythroid differentiation. This Mus musculus (Mouse) protein is T-cell acute lymphocytic leukemia protein 1 homolog (Tal1).